A 38-amino-acid chain; its full sequence is Large ribosomal subunit protein bL36 (38 aa).

This sequence belongs to the bacterial ribosomal protein bL36 family.

This chain is Large ribosomal subunit protein bL36, found in Porphyromonas gingivalis (strain ATCC 33277 / DSM 20709 / CIP 103683 / JCM 12257 / NCTC 11834 / 2561).